Reading from the N-terminus, the 387-residue chain is MKTVSVFGSTGAIGQMIIDIIFSELDKYQVKVLVAKSNIQLLAFQAKLVNAERVVITDVNLYRELKDLLLDTNIKVSAGDDGMIMATSLDVDYAMMAIVGIAALVPMTYLINSNVKVIALANKESIVCGGALLLSLAKEKDVKIIPLDSEHNAIYQILADKGHKDLEKITLTASGGPLLSMDYEQMKYVTVQDTVKHPVWKMGKKISVDSATMINKSLEIIEAYYLFSIKAEKLDVIIHNESVVHGIISYIDGTSIAFMSVPDMKIPIMYSLSWPNRSAALCKKLNLALYNQLTFMKPDIYKFPGIKLGFEVLKTSNVHANGIILNAANEIAVNAFLAKKIGFLDIVNIVYETLNLVNYGRINSLSNILDCDAISRKVASSTIDKLC.

Residues Thr10, Gly11, Ile13, Asn38, and Asn122 each coordinate NADPH. Lys123 is a 1-deoxy-D-xylulose 5-phosphate binding site. Residue Glu124 coordinates NADPH. Asp148 lines the Mn(2+) pocket. 1-deoxy-D-xylulose 5-phosphate contacts are provided by Ser149, Glu150, Ser174, and His197. Glu150 contacts Mn(2+). Position 203 (Gly203) interacts with NADPH. The 1-deoxy-D-xylulose 5-phosphate site is built by Ser210, Asn215, Lys216, and Glu219. A Mn(2+)-binding site is contributed by Glu219.

Belongs to the DXR family. Mg(2+) is required as a cofactor. Requires Mn(2+) as cofactor.

It catalyses the reaction 2-C-methyl-D-erythritol 4-phosphate + NADP(+) = 1-deoxy-D-xylulose 5-phosphate + NADPH + H(+). The protein operates within isoprenoid biosynthesis; isopentenyl diphosphate biosynthesis via DXP pathway; isopentenyl diphosphate from 1-deoxy-D-xylulose 5-phosphate: step 1/6. Functionally, catalyzes the NADPH-dependent rearrangement and reduction of 1-deoxy-D-xylulose-5-phosphate (DXP) to 2-C-methyl-D-erythritol 4-phosphate (MEP). This chain is 1-deoxy-D-xylulose 5-phosphate reductoisomerase, found in Ehrlichia canis (strain Jake).